The following is a 392-amino-acid chain: Antitrypsin (392 aa).

The first 16 residues, Met1 to Ala16, serve as a signal peptide directing secretion.

Belongs to the serpin family. In terms of tissue distribution, hemolymph.

It localises to the secreted. In terms of biological role, may play a role in the prophenoloxidase activating system in the silkworm hemolymph. This chain is Antitrypsin, found in Bombyx mori (Silk moth).